Here is a 145-residue protein sequence, read N- to C-terminus: Deoxyuridine 5'-triphosphate nucleotidohydrolase (145 aa).

Substrate-binding positions include 63–65 (RSG), Asn-76, 80–82 (TID), and Lys-90.

Belongs to the dUTPase family. Mg(2+) serves as cofactor.

The enzyme catalyses dUTP + H2O = dUMP + diphosphate + H(+). Its pathway is pyrimidine metabolism; dUMP biosynthesis; dUMP from dCTP (dUTP route): step 2/2. Its function is as follows. This enzyme is involved in nucleotide metabolism: it produces dUMP, the immediate precursor of thymidine nucleotides and it decreases the intracellular concentration of dUTP so that uracil cannot be incorporated into DNA. The protein is Deoxyuridine 5'-triphosphate nucleotidohydrolase of Clostridium acetobutylicum (strain ATCC 824 / DSM 792 / JCM 1419 / IAM 19013 / LMG 5710 / NBRC 13948 / NRRL B-527 / VKM B-1787 / 2291 / W).